The following is a 123-amino-acid chain: Large ribosomal subunit protein bL12 (123 aa).

This sequence belongs to the bacterial ribosomal protein bL12 family. In terms of assembly, homodimer. Part of the ribosomal stalk of the 50S ribosomal subunit. Forms a multimeric L10(L12)X complex, where L10 forms an elongated spine to which 2 to 4 L12 dimers bind in a sequential fashion. Binds GTP-bound translation factors.

Functionally, forms part of the ribosomal stalk which helps the ribosome interact with GTP-bound translation factors. Is thus essential for accurate translation. This Chlorobium luteolum (strain DSM 273 / BCRC 81028 / 2530) (Pelodictyon luteolum) protein is Large ribosomal subunit protein bL12.